The following is a 304-amino-acid chain: UDP-3-O-acyl-N-acetylglucosamine deacetylase (304 aa).

Residues His-79, His-238, and Asp-242 each coordinate Zn(2+). The Proton donor role is filled by His-265.

It belongs to the LpxC family. Zn(2+) serves as cofactor.

The catalysed reaction is a UDP-3-O-[(3R)-3-hydroxyacyl]-N-acetyl-alpha-D-glucosamine + H2O = a UDP-3-O-[(3R)-3-hydroxyacyl]-alpha-D-glucosamine + acetate. The protein operates within glycolipid biosynthesis; lipid IV(A) biosynthesis; lipid IV(A) from (3R)-3-hydroxytetradecanoyl-[acyl-carrier-protein] and UDP-N-acetyl-alpha-D-glucosamine: step 2/6. Catalyzes the hydrolysis of UDP-3-O-myristoyl-N-acetylglucosamine to form UDP-3-O-myristoylglucosamine and acetate, the committed step in lipid A biosynthesis. In Chromobacterium violaceum (strain ATCC 12472 / DSM 30191 / JCM 1249 / CCUG 213 / NBRC 12614 / NCIMB 9131 / NCTC 9757 / MK), this protein is UDP-3-O-acyl-N-acetylglucosamine deacetylase.